Here is a 269-residue protein sequence, read N- to C-terminus: D-aminoacyl-tRNA deacylase (269 aa).

The protein belongs to the DtdA deacylase family. Monomer. The cofactor is Zn(2+).

The enzyme catalyses a D-aminoacyl-tRNA + H2O = a tRNA + a D-alpha-amino acid + H(+). It catalyses the reaction glycyl-tRNA(Ala) + H2O = tRNA(Ala) + glycine + H(+). In terms of biological role, D-aminoacyl-tRNA deacylase with broad substrate specificity. By recycling D-aminoacyl-tRNA to D-amino acids and free tRNA molecules, this enzyme counteracts the toxicity associated with the formation of D-aminoacyl-tRNA entities in vivo. The sequence is that of D-aminoacyl-tRNA deacylase from Caldivirga maquilingensis (strain ATCC 700844 / DSM 13496 / JCM 10307 / IC-167).